The following is a 171-amino-acid chain: Co-chaperone protein HscB (171 aa).

The region spanning Asp-2–Leu-74 is the J domain.

Belongs to the HscB family. In terms of assembly, interacts with HscA and stimulates its ATPase activity. Interacts with IscU.

In terms of biological role, co-chaperone involved in the maturation of iron-sulfur cluster-containing proteins. Seems to help targeting proteins to be folded toward HscA. This Shigella boydii serotype 18 (strain CDC 3083-94 / BS512) protein is Co-chaperone protein HscB.